The primary structure comprises 304 residues: Glutaminase (304 aa).

Residues S63, N114, E158, N165, Y189, Y240, and V258 each coordinate substrate.

The protein belongs to the glutaminase family. In terms of assembly, homotetramer.

The catalysed reaction is L-glutamine + H2O = L-glutamate + NH4(+). The sequence is that of Glutaminase from Shewanella baltica (strain OS155 / ATCC BAA-1091).